A 312-amino-acid polypeptide reads, in one-letter code: Zinc-finger homeodomain protein 4 (312 aa).

The segment at 20 to 74 (GGGGSHGHMIHHHDHHAANSAPPTHNNNNTTQPPPMPLHGNGHGNNYDHHHHQDP) is disordered. Residues 37 to 50 (ANSAPPTHNNNNTT) are compositionally biased toward low complexity. The ZF-HD dimerization-type; degenerate zinc-finger motif lies at 90–139 (YKECLKNHAAAMGGNATDGCGEFMPSGEDGSIEALTCSACNCHRNFHRKE). Residues 218 to 281 (KKRFRTKFTP…NNKIHFSKKN (64 aa)) constitute a DNA-binding region (homeobox).

In terms of assembly, homo- and heterodimer with other ZFHD proteins. Interacts with ZHD1, ZHD2, ZHD5, ZHD7, ZHD8, ZHD10 and ZHD11. In terms of tissue distribution, mostly expressed in flowers and inflorescence.

It is found in the nucleus. Its function is as follows. Putative transcription factor. Probably involved in the regulation of floral induction. The protein is Zinc-finger homeodomain protein 4 (ZHD4) of Arabidopsis thaliana (Mouse-ear cress).